A 350-amino-acid chain; its full sequence is tRNA uridine(34) hydroxylase (350 aa).

Positions 146–240 (DDPDAVFIDM…YARRARAQGL (95 aa)) constitute a Rhodanese domain. C200 functions as the Cysteine persulfide intermediate in the catalytic mechanism. The segment covering 319 to 328 (RRRRAGRENG) has biased composition (basic and acidic residues). A disordered region spans residues 319–350 (RRRRAGRENGNKIFNKSRGRLNSKLSIPDPAE).

It belongs to the TrhO family.

The enzyme catalyses uridine(34) in tRNA + AH2 + O2 = 5-hydroxyuridine(34) in tRNA + A + H2O. In terms of biological role, catalyzes oxygen-dependent 5-hydroxyuridine (ho5U) modification at position 34 in tRNAs. The polypeptide is tRNA uridine(34) hydroxylase (Salmonella typhimurium (strain LT2 / SGSC1412 / ATCC 700720)).